A 246-amino-acid chain; its full sequence is tRNA (guanine-N(1)-)-methyltransferase (246 aa).

Residues glycine 113 and 132–137 (LGDFVV) each bind S-adenosyl-L-methionine.

The protein belongs to the RNA methyltransferase TrmD family. Homodimer.

Its subcellular location is the cytoplasm. The enzyme catalyses guanosine(37) in tRNA + S-adenosyl-L-methionine = N(1)-methylguanosine(37) in tRNA + S-adenosyl-L-homocysteine + H(+). Functionally, specifically methylates guanosine-37 in various tRNAs. The polypeptide is tRNA (guanine-N(1)-)-methyltransferase (Latilactobacillus sakei subsp. sakei (strain 23K) (Lactobacillus sakei subsp. sakei)).